The following is a 798-amino-acid chain: ATP-dependent RNA helicase bel (798 aa).

The segment at 16-248 (VAGLDLNGGS…SRWKEGGGSN (233 aa)) is disordered. Residues 31–42 (PITSKTSTNSVT) show a composition bias toward polar residues. Gly residues-rich tracts occupy residues 94-110 (RGGG…GGRG), 118-132 (YGYG…GGGG), and 154-178 (SGGG…GGSG). Phosphoserine occurs at positions 177 and 179. A compositionally biased stretch (basic and acidic residues) spans 198–209 (RNDRWQEPERPA). Ser214 and Ser219 each carry phosphoserine. A Q motif motif is present at residues 295 to 323 (TSFDDVQLTEIIRNNVALARYDKPTPVQK). ATP is bound by residues 315–322 (YDKPTPVQ) and 339–346 (AQTGSGKT). The Helicase ATP-binding domain maps to 326-515 (IPIIINGRDL…SDFLSNYIFL (190 aa)). The short motif at 459-462 (DEAD) is the DEAD box element. In terms of domain architecture, Helicase C-terminal spans 542–693 (YLLDLLSSIR…EIPSFMEDMS (152 aa)). Residue Ser638 is modified to Phosphoserine. Disordered stretches follow at residues 689-765 (MEDM…SGGG) and 778-798 (GGSY…WWAQ). Composition is skewed to gly residues over residues 706–717 (RGGGGRYGGGFG) and 740–750 (GGSGSGGGGGS).

This sequence belongs to the DEAD box helicase family. DDX3/DED1 subfamily. In terms of tissue distribution, vas and bel colocalize in nuage (perinuclear, electron-dense granules in germline cells) and at the oocyte posterior during oogenesis.

It is found in the cytoplasm. It catalyses the reaction ATP + H2O = ADP + phosphate + H(+). ATP-dependent RNA helicase that is essential and required for cellular function, larval growth, and for male and female fertility. Also required for RNA interference (RNAi), double-stranded RNA induces potent and specific gene silencing, by acting downstream of dsRNA internalization. RNAi is mediated by the RNA-induced silencing complex (RISC), a sequence-specific, multicomponent nuclease that destroys or silences messenger RNAs homologous to the silencing trigger. The sequence is that of ATP-dependent RNA helicase bel from Drosophila melanogaster (Fruit fly).